We begin with the raw amino-acid sequence, 414 residues long: Alanine--glyoxylate aminotransferase (414 aa).

The transit peptide at 1–23 (MFQALAKASAALGPRAAGWVRTM) directs the protein to the mitochondrion. The residue at position 231 (K231) is an N6-(pyridoxal phosphate)lysine. Residues K256 and K334 each carry the N6-acetyllysine modification. R382 is a substrate binding site.

Belongs to the class-V pyridoxal-phosphate-dependent aminotransferase family. As to quaternary structure, homodimer. It depends on pyridoxal 5'-phosphate as a cofactor.

Its subcellular location is the peroxisome. It is found in the mitochondrion matrix. It catalyses the reaction L-serine + pyruvate = 3-hydroxypyruvate + L-alanine. The enzyme catalyses glyoxylate + L-alanine = glycine + pyruvate. Its function is as follows. Catalyzes the transamination of glyoxylate to glycine and contributes to the glyoxylate detoxification. Functionally, catalyzes the transamination between L-serine and pyruvate and weakly contributes to gluconeogenesis from the L-serine metabolism. This chain is Alanine--glyoxylate aminotransferase, found in Callithrix jacchus (White-tufted-ear marmoset).